The primary structure comprises 590 residues: Aspartate--tRNA(Asp/Asn) ligase (590 aa).

Glutamate 175 contributes to the L-aspartate binding site. The tract at residues 199 to 202 (QQFK) is aspartate. The L-aspartate site is built by arginine 221 and histidine 452. Position 221–223 (221–223 (RDE)) interacts with ATP. Glutamate 485 is a binding site for ATP. Arginine 492 contacts L-aspartate. Residue 537–540 (GIDR) coordinates ATP.

It belongs to the class-II aminoacyl-tRNA synthetase family. Type 1 subfamily. In terms of assembly, homodimer.

The protein localises to the cytoplasm. The enzyme catalyses tRNA(Asx) + L-aspartate + ATP = L-aspartyl-tRNA(Asx) + AMP + diphosphate. Its function is as follows. Aspartyl-tRNA synthetase with relaxed tRNA specificity since it is able to aspartylate not only its cognate tRNA(Asp) but also tRNA(Asn). Reaction proceeds in two steps: L-aspartate is first activated by ATP to form Asp-AMP and then transferred to the acceptor end of tRNA(Asp/Asn). The sequence is that of Aspartate--tRNA(Asp/Asn) ligase from Dinoroseobacter shibae (strain DSM 16493 / NCIMB 14021 / DFL 12).